We begin with the raw amino-acid sequence, 266 residues long: Mitochondrial S-adenosylmethionine carrier protein (266 aa).

3 Solcar repeats span residues 4-77 (RELC…AKRF), 85-167 (LSPI…LKNL), and 176-264 (VDCW…VRSS). 6 consecutive transmembrane segments (helical) span residues 5 to 25 (ELCA…LILF), 49 to 69 (IYAG…AFFV), 84 to 104 (YLSP…ACLI), 141 to 161 (RGYK…FPLW), 181 to 201 (SAVC…PLDV), and 237 to 257 (FAGV…FLGA).

This sequence belongs to the mitochondrial carrier (TC 2.A.29) family.

The protein resides in the mitochondrion inner membrane. It catalyses the reaction S-adenosyl-L-homocysteine(out) + S-adenosyl-L-methionine(in) = S-adenosyl-L-homocysteine(in) + S-adenosyl-L-methionine(out). In terms of biological role, mitochondrial S-adenosyl-L-methionine/S-adenosyl-L-homocysteine antiporter. Mediates the exchange of cytosolic S-adenosyl-L-methionine, the predominant methyl-group donor for macromolecule methylation processes, for mitochondrial S-adenosylhomocysteine(SAH), a by-product of methylation reactions. The chain is Mitochondrial S-adenosylmethionine carrier protein (slc25a26) from Xenopus laevis (African clawed frog).